The following is a 364-amino-acid chain: UDP-N-acetylglucosamine--N-acetylmuramyl-(pentapeptide) pyrophosphoryl-undecaprenol N-acetylglucosamine transferase 1 (364 aa).

Residues 10 to 12, Asn124, Ser195, Ile250, and Gln295 contribute to the UDP-N-acetyl-alpha-D-glucosamine site; that span reads TGG.

The protein belongs to the glycosyltransferase 28 family. MurG subfamily.

Its subcellular location is the cell membrane. It catalyses the reaction di-trans,octa-cis-undecaprenyl diphospho-N-acetyl-alpha-D-muramoyl-L-alanyl-D-glutamyl-meso-2,6-diaminopimeloyl-D-alanyl-D-alanine + UDP-N-acetyl-alpha-D-glucosamine = di-trans,octa-cis-undecaprenyl diphospho-[N-acetyl-alpha-D-glucosaminyl-(1-&gt;4)]-N-acetyl-alpha-D-muramoyl-L-alanyl-D-glutamyl-meso-2,6-diaminopimeloyl-D-alanyl-D-alanine + UDP + H(+). The protein operates within cell wall biogenesis; peptidoglycan biosynthesis. Cell wall formation. Catalyzes the transfer of a GlcNAc subunit on undecaprenyl-pyrophosphoryl-MurNAc-pentapeptide (lipid intermediate I) to form undecaprenyl-pyrophosphoryl-MurNAc-(pentapeptide)GlcNAc (lipid intermediate II). This chain is UDP-N-acetylglucosamine--N-acetylmuramyl-(pentapeptide) pyrophosphoryl-undecaprenol N-acetylglucosamine transferase 1, found in Bacillus cereus (strain ATCC 14579 / DSM 31 / CCUG 7414 / JCM 2152 / NBRC 15305 / NCIMB 9373 / NCTC 2599 / NRRL B-3711).